The sequence spans 214 residues: A-type ATP synthase subunit D (214 aa).

It belongs to the V-ATPase D subunit family. Has multiple subunits with at least A(3), B(3), C, D, E, F, H, I and proteolipid K(x).

It is found in the cell membrane. Its function is as follows. Component of the A-type ATP synthase that produces ATP from ADP in the presence of a proton gradient across the membrane. This chain is A-type ATP synthase subunit D, found in Desulfurococcus sp. (strain SY).